Consider the following 386-residue polypeptide: Na(+)/H(+) antiporter NhaA (386 aa).

The next 11 helical transmembrane spans lie at 11–31 (NDAT…FLAN), 60–80 (LLLW…GLEV), 96–116 (MFPL…YAAF), 126–146 (GWAI…ALLG), 155–175 (MFLM…IALF), 180–200 (LSLI…VLNG), 218–238 (VAVL…GLFI), 260–280 (VSWL…LSGV), 293–313 (ITLG…WLAV), 326–346 (LIDI…SIFI), and 358–378 (LVTL…LVGY).

Belongs to the NhaA Na(+)/H(+) (TC 2.A.33) antiporter family.

Its subcellular location is the cell inner membrane. It catalyses the reaction Na(+)(in) + 2 H(+)(out) = Na(+)(out) + 2 H(+)(in). Its function is as follows. Na(+)/H(+) antiporter that extrudes sodium in exchange for external protons. The sequence is that of Na(+)/H(+) antiporter NhaA from Erwinia tasmaniensis (strain DSM 17950 / CFBP 7177 / CIP 109463 / NCPPB 4357 / Et1/99).